A 215-amino-acid polypeptide reads, in one-letter code: Pyrrolidone-carboxylate peptidase (215 aa).

Residues Glu-80, Cys-143, and His-167 contribute to the active site.

Belongs to the peptidase C15 family. As to quaternary structure, homotetramer.

The protein resides in the cytoplasm. It catalyses the reaction Release of an N-terminal pyroglutamyl group from a polypeptide, the second amino acid generally not being Pro.. In terms of biological role, removes 5-oxoproline from various penultimate amino acid residues except L-proline. In Bacillus cereus (strain ZK / E33L), this protein is Pyrrolidone-carboxylate peptidase.